The sequence spans 260 residues: MVLIRVLANLLILQLSYAQKSSELVIGGDECNINEHRFLVALYDVSSGDFRGSGALINPEWVLTAAHCETEEMKLQFGLHSKRVPNKDKQTRVSKEKFFCESNKNYTKWNKDIMLIKLNRPVKNSTHIAPLSLPSNPPSVGSVCRIMGWGTLSDTEMILPDVPHCANINLLNYSDCQAAYPELPAKSRTLCAGILEGGKDTCSGDSGGPLICNGTFQGIASWGSTLCGYVREPGSYTKVFDHLDWIQSIIAGNTNVTCPL.

An N-terminal signal peptide occupies residues 1–18; the sequence is MVLIRVLANLLILQLSYA. A propeptide spanning residues 19 to 24 is cleaved from the precursor; the sequence is QKSSEL. Residues 25 to 251 form the Peptidase S1 domain; it reads VIGGDECNIN…HLDWIQSIIA (227 aa). 5 disulfide bridges follow: Cys-31/Cys-165, Cys-100/Cys-258, Cys-144/Cys-212, Cys-176/Cys-191, and Cys-202/Cys-227. His-67 functions as the Charge relay system in the catalytic mechanism. The N-linked (GlcNAc...) asparagine glycan is linked to Asn-105. The Charge relay system role is filled by Asp-112. 2 N-linked (GlcNAc...) asparagine glycosylation sites follow: Asn-124 and Asn-172. Ser-206 acts as the Charge relay system in catalysis. 2 N-linked (GlcNAc...) asparagine glycosylation sites follow: Asn-213 and Asn-255.

Belongs to the peptidase S1 family. Snake venom subfamily. Monomer. In terms of tissue distribution, expressed by the venom gland.

The protein resides in the secreted. Its function is as follows. Snake venom serine protease that may act in the hemostasis system of the prey. The protein is Snake venom serine protease KN5 of Trimeresurus stejnegeri (Chinese green tree viper).